A 592-amino-acid chain; its full sequence is Inactive heparanase-2 (592 aa).

The signal sequence occupies residues 1–38 (MRVLCAFPEAMASSSSRPPSCLALVALFLALLLHLSLS). 2 N-linked (GlcNAc...) asparagine glycosylation sites follow: Asn254 and Asn392.

Belongs to the glycosyl hydrolase 79 family. Interacts with HPSE. Interacts with SDC1 (via glycan chains).

It is found in the secreted. It localises to the extracellular space. Its subcellular location is the extracellular matrix. Binds heparin and heparan sulfate with high affinity, but lacks heparanase activity. Inhibits HPSE, possibly by competing for its substrates (in vitro). In Mus musculus (Mouse), this protein is Inactive heparanase-2 (Hpse2).